We begin with the raw amino-acid sequence, 102 residues long: ATP-dependent Clp protease adapter protein ClpS (102 aa).

The protein belongs to the ClpS family. As to quaternary structure, binds to the N-terminal domain of the chaperone ClpA.

Its function is as follows. Involved in the modulation of the specificity of the ClpAP-mediated ATP-dependent protein degradation. This Shewanella amazonensis (strain ATCC BAA-1098 / SB2B) protein is ATP-dependent Clp protease adapter protein ClpS.